Reading from the N-terminus, the 538-residue chain is Putative outer membrane porin BglH (538 aa).

The first 25 residues, 1–25 (MFRRNLITSAILLMAPLAFSAQSLA), serve as a signal peptide directing secretion. Residues 52-82 (KDEEKKKYTPATVNRSVSTNDQGYAANPFPT) are disordered. Over residues 62 to 73 (ATVNRSVSTNDQ) the composition is skewed to polar residues.

This sequence belongs to the porin LamB (TC 1.B.3) family.

The protein localises to the cell outer membrane. Its function is as follows. May be a sugar porin with a broad carbohydrate specificity. The chain is Putative outer membrane porin BglH (bglH) from Escherichia coli O139:H28 (strain E24377A / ETEC).